Consider the following 130-residue polypeptide: Ribosome-binding factor A (130 aa).

Belongs to the RbfA family. In terms of assembly, monomer. Binds 30S ribosomal subunits, but not 50S ribosomal subunits or 70S ribosomes.

The protein localises to the cytoplasm. Functionally, one of several proteins that assist in the late maturation steps of the functional core of the 30S ribosomal subunit. Associates with free 30S ribosomal subunits (but not with 30S subunits that are part of 70S ribosomes or polysomes). Required for efficient processing of 16S rRNA. May interact with the 5'-terminal helix region of 16S rRNA. The chain is Ribosome-binding factor A from Lachnospira eligens (strain ATCC 27750 / DSM 3376 / VPI C15-48 / C15-B4) (Eubacterium eligens).